A 115-amino-acid chain; its full sequence is Translation initiation factor 1A 2 (115 aa).

The tract at residues 1-34 (MANYRSTIRHRNSGSRKSVSGDTHEVTRVRTPQK) is disordered. Residues 22 to 34 (DTHEVTRVRTPQK) are compositionally biased toward basic and acidic residues. An S1-like domain is found at 27-101 (TRVRTPQKDR…SKADVTWKYT (75 aa)).

Belongs to the eIF-1A family.

Its function is as follows. Seems to be required for maximal rate of protein biosynthesis. Enhances ribosome dissociation into subunits and stabilizes the binding of the initiator Met-tRNA(I) to 40 S ribosomal subunits. The sequence is that of Translation initiation factor 1A 2 from Methanosarcina barkeri (strain Fusaro / DSM 804).